Consider the following 78-residue polypeptide: Acyl carrier protein (78 aa).

The Carrier domain maps to 2-77 (STIEERVKKI…AAIDYVKAHQ (76 aa)). Serine 37 carries the post-translational modification O-(pantetheine 4'-phosphoryl)serine.

The protein belongs to the acyl carrier protein (ACP) family. 4'-phosphopantetheine is transferred from CoA to a specific serine of apo-ACP by AcpS. This modification is essential for activity because fatty acids are bound in thioester linkage to the sulfhydryl of the prosthetic group.

The protein resides in the cytoplasm. It participates in lipid metabolism; fatty acid biosynthesis. In terms of biological role, carrier of the growing fatty acid chain in fatty acid biosynthesis. The polypeptide is Acyl carrier protein (Pseudomonas putida (strain ATCC 700007 / DSM 6899 / JCM 31910 / BCRC 17059 / LMG 24140 / F1)).